The primary structure comprises 425 residues: tRNA(Ile)-lysidine synthase (425 aa).

ATP is bound at residue 27 to 32; it reads SGGLDS.

This sequence belongs to the tRNA(Ile)-lysidine synthase family.

The protein localises to the cytoplasm. The catalysed reaction is cytidine(34) in tRNA(Ile2) + L-lysine + ATP = lysidine(34) in tRNA(Ile2) + AMP + diphosphate + H(+). Ligates lysine onto the cytidine present at position 34 of the AUA codon-specific tRNA(Ile) that contains the anticodon CAU, in an ATP-dependent manner. Cytidine is converted to lysidine, thus changing the amino acid specificity of the tRNA from methionine to isoleucine. The chain is tRNA(Ile)-lysidine synthase from Streptococcus pneumoniae serotype 19F (strain G54).